The following is a 193-amino-acid chain: Large ribosomal subunit protein uL5 (193 aa).

It belongs to the universal ribosomal protein uL5 family. In terms of assembly, part of the 50S ribosomal subunit; part of the 5S rRNA/L5/L18/L25 subcomplex. Contacts the 5S rRNA and the P site tRNA. Forms a bridge to the 30S subunit in the 70S ribosome.

This is one of the proteins that bind and probably mediate the attachment of the 5S RNA into the large ribosomal subunit, where it forms part of the central protuberance. In the 70S ribosome it contacts protein S13 of the 30S subunit (bridge B1b), connecting the 2 subunits; this bridge is implicated in subunit movement. Contacts the P site tRNA; the 5S rRNA and some of its associated proteins might help stabilize positioning of ribosome-bound tRNAs. In Corynebacterium urealyticum (strain ATCC 43042 / DSM 7109), this protein is Large ribosomal subunit protein uL5.